Here is a 120-residue protein sequence, read N- to C-terminus: Phosphoribosyl-AMP cyclohydrolase (120 aa).

D75 provides a ligand contact to Mg(2+). A Zn(2+)-binding site is contributed by C76. Mg(2+) is bound by residues D77 and D79. 2 residues coordinate Zn(2+): C92 and C99.

This sequence belongs to the PRA-CH family. As to quaternary structure, homodimer. Requires Mg(2+) as cofactor. It depends on Zn(2+) as a cofactor.

It localises to the cytoplasm. It catalyses the reaction 1-(5-phospho-beta-D-ribosyl)-5'-AMP + H2O = 1-(5-phospho-beta-D-ribosyl)-5-[(5-phospho-beta-D-ribosylamino)methylideneamino]imidazole-4-carboxamide. It functions in the pathway amino-acid biosynthesis; L-histidine biosynthesis; L-histidine from 5-phospho-alpha-D-ribose 1-diphosphate: step 3/9. Catalyzes the hydrolysis of the adenine ring of phosphoribosyl-AMP. The protein is Phosphoribosyl-AMP cyclohydrolase of Methanosarcina acetivorans (strain ATCC 35395 / DSM 2834 / JCM 12185 / C2A).